Consider the following 182-residue polypeptide: Mitochondrial FAD-linked sulfhydryl oxidase erv1 (182 aa).

An ERV/ALR sulfhydryl oxidase domain is found at 75-177 (RLPDVAELGR…FNCQVWSKKA (103 aa)). Residues 81 to 87 (ELGRSTW), histidine 91, and tyrosine 120 contribute to the FAD site. 2 cysteine pairs are disulfide-bonded: cysteine 122–cysteine 125 and cysteine 153–cysteine 170. Residues 153–165 (CEAH…RLGK) and 176–177 (KA) each bind FAD.

The cofactor is FAD.

The protein localises to the mitochondrion intermembrane space. It carries out the reaction 2 R'C(R)SH + O2 = R'C(R)S-S(R)CR' + H2O2. FAD-dependent sulfhydryl oxidase that catalyzes disulfide bond formation. Required for the import and folding of small cysteine-containing proteins in the mitochondrial intermembrane space (IMS). This Schizosaccharomyces pombe (strain 972 / ATCC 24843) (Fission yeast) protein is Mitochondrial FAD-linked sulfhydryl oxidase erv1 (erv1).